We begin with the raw amino-acid sequence, 38 residues long: Large ribosomal subunit protein bL36 (38 aa).

Belongs to the bacterial ribosomal protein bL36 family.

The polypeptide is Large ribosomal subunit protein bL36 (Ralstonia nicotianae (strain ATCC BAA-1114 / GMI1000) (Ralstonia solanacearum)).